The following is a 246-amino-acid chain: Uridylate kinase (246 aa).

ATP is bound at residue 16–19 (KFSG). Glycine 58 serves as a coordination point for UMP. Glycine 59 and arginine 63 together coordinate ATP. UMP-binding positions include aspartate 78 and 139–146 (TGNPFFTT). Threonine 166, tyrosine 172, and aspartate 175 together coordinate ATP.

It belongs to the UMP kinase family. In terms of assembly, homohexamer.

It localises to the cytoplasm. It catalyses the reaction UMP + ATP = UDP + ADP. It participates in pyrimidine metabolism; CTP biosynthesis via de novo pathway; UDP from UMP (UMPK route): step 1/1. With respect to regulation, inhibited by UTP. Catalyzes the reversible phosphorylation of UMP to UDP. The chain is Uridylate kinase from Legionella pneumophila (strain Corby).